The chain runs to 297 residues: Protein BCCIP homolog (297 aa).

The tract at residues 1–40 (MSANKQKKLSTMEVDPNEDVSSSSEDDDDDEPHPDAYKGN) is disordered.

The protein belongs to the BCP1 family.

This chain is Protein BCCIP homolog, found in Drosophila melanogaster (Fruit fly).